The sequence spans 655 residues: p-hydroxybenzoic acid efflux pump subunit AaeB (655 aa).

The Periplasmic portion of the chain corresponds to 1–12 (MGIFSIANQHIR). Residues 13 to 33 (FAVKLACAIVLALFIGFHFQL) traverse the membrane as a helical segment. Over 34–37 (ETPR) the chain is Cytoplasmic. The helical transmembrane segment at 38-58 (WAVLTAAIVAAGPAFAAGGEP) threads the bilayer. Residues 59-68 (YSGAIRYRGM) lie on the Periplasmic side of the membrane. A helical membrane pass occupies residues 69–89 (LRIIGTFIGCIAALIIIISMI). Over 90–92 (RAP) the chain is Cytoplasmic. Residues 93 to 113 (LLMILVCCVWVGFCTWISSLV) traverse the membrane as a helical segment. The Periplasmic segment spans residues 114-120 (RIENSYA). Residues 121–141 (WGLSGYTALIIVITIQTEPLL) form a helical membrane-spanning segment. At 142-151 (TPQFALERCS) the chain is on the cytoplasmic side. Residues 152–172 (EIVIGIGCAILADLLFSPRSI) traverse the membrane as a helical segment. The Periplasmic portion of the chain corresponds to 173-369 (KQEVDRELDS…RTTLSCILGT (197 aa)). Residues 370 to 390 (LFWLWTGWTSGNGEMVMIAVV) traverse the membrane as a helical segment. The Cytoplasmic segment spans residues 391–406 (TSLAMRLPNPRMVCID). Residues 407 to 427 (FIYGTLAALPLGLLYFLVIIP) traverse the membrane as a helical segment. The Periplasmic segment spans residues 428-430 (NTQ). The helical transmembrane segment at 431 to 451 (QSMLLLCLSLAVLGFFIGIEV) threads the bilayer. The Cytoplasmic segment spans residues 452 to 458 (QKRRLGS). A helical transmembrane segment spans residues 459–479 (MGALASTINIIVLDNPMTFHF). The Periplasmic segment spans residues 480-481 (SQ). The chain crosses the membrane as a helical span at residues 482–502 (FLDSALGQIVGCMLAFIVILL). Over 503–655 (VRDKSKDRTG…HKYQNALTDS (153 aa)) the chain is Cytoplasmic.

It belongs to the aromatic acid exporter ArAE (TC 2.A.85) family.

The protein resides in the cell inner membrane. Functionally, forms an efflux pump with AaeA. Could function as a metabolic relief valve, allowing to eliminate certain compounds when they accumulate to high levels in the cell. In Salmonella paratyphi A (strain ATCC 9150 / SARB42), this protein is p-hydroxybenzoic acid efflux pump subunit AaeB.